The chain runs to 450 residues: tRNA-2-methylthio-N(6)-dimethylallyladenosine synthase (450 aa).

An MTTase N-terminal domain is found at 14-132 (GEFFIETWGC…FPNYLNEVKK (119 aa)). Residues C23, C59, C93, C169, C173, and C176 each coordinate [4Fe-4S] cluster. In terms of domain architecture, Radical SAM core spans 155 to 385 (RKNSMKAFVT…VEVVNEISAK (231 aa)). Positions 388-450 (KAYEGKIEEV…NSFSLTGEEI (63 aa)) constitute a TRAM domain.

Belongs to the methylthiotransferase family. MiaB subfamily. As to quaternary structure, monomer. The cofactor is [4Fe-4S] cluster.

The protein localises to the cytoplasm. The catalysed reaction is N(6)-dimethylallyladenosine(37) in tRNA + (sulfur carrier)-SH + AH2 + 2 S-adenosyl-L-methionine = 2-methylsulfanyl-N(6)-dimethylallyladenosine(37) in tRNA + (sulfur carrier)-H + 5'-deoxyadenosine + L-methionine + A + S-adenosyl-L-homocysteine + 2 H(+). Catalyzes the methylthiolation of N6-(dimethylallyl)adenosine (i(6)A), leading to the formation of 2-methylthio-N6-(dimethylallyl)adenosine (ms(2)i(6)A) at position 37 in tRNAs that read codons beginning with uridine. The chain is tRNA-2-methylthio-N(6)-dimethylallyladenosine synthase from Clostridium botulinum (strain Langeland / NCTC 10281 / Type F).